Consider the following 175-residue polypeptide: Adenine phosphoribosyltransferase (175 aa).

Belongs to the purine/pyrimidine phosphoribosyltransferase family. In terms of assembly, homodimer.

The protein resides in the cytoplasm. The catalysed reaction is AMP + diphosphate = 5-phospho-alpha-D-ribose 1-diphosphate + adenine. Its pathway is purine metabolism; AMP biosynthesis via salvage pathway; AMP from adenine: step 1/1. In terms of biological role, catalyzes a salvage reaction resulting in the formation of AMP, that is energically less costly than de novo synthesis. This is Adenine phosphoribosyltransferase from Clavibacter michiganensis subsp. michiganensis (strain NCPPB 382).